A 221-amino-acid chain; its full sequence is Putative hemin import ATP-binding protein HrtA (221 aa).

The region spanning 3–221 is the ABC transporter domain; sequence LQLKHITKTF…IEIQDGKIEL (219 aa). An ATP-binding site is contributed by 39 to 46; the sequence is GASGSGKS.

Belongs to the ABC transporter superfamily. HrtA family. The complex is composed of two ATP-binding proteins (HrtA), two transmembrane proteins (HrtB) and a solute-binding protein.

Its subcellular location is the cell membrane. Its function is as follows. Part of the ABC transporter complex hrt involved in hemin import. Responsible for energy coupling to the transport system. In Staphylococcus haemolyticus (strain JCSC1435), this protein is Putative hemin import ATP-binding protein HrtA (hrtA).